The primary structure comprises 538 residues: DALR anticodon-binding domain-containing protein 3 (538 aa).

As to quaternary structure, part of a complex containing tRNA(Arg) and METTL2. Interacts with tRNA(Arg)(CCU) and tRNA(Arg)(UCU). Interacts with METTL2.

In terms of biological role, involved in tRNA methylation. Facilitates the recognition and targeting of tRNA(Arg)(CCU) and tRNA(Arg)(UCU) substrates for N(3)-methylcytidine modification by METTL2. This is DALR anticodon-binding domain-containing protein 3 (Dalrd3) from Rattus norvegicus (Rat).